Reading from the N-terminus, the 423-residue chain is Putative serpin-Z12 (423 aa).

Residues 1-25 (MAALAAGEPFSGRATGGDGGVRSDV) form a disordered region. The interval 370-394 (GTVAAASTAVVMMQKGSSLPPVDFV) is RCL.

This sequence belongs to the serpin family.

Its function is as follows. Probable serine protease inhibitor. This is Putative serpin-Z12 from Oryza sativa subsp. japonica (Rice).